Here is a 470-residue protein sequence, read N- to C-terminus: Siroheme synthase (470 aa).

The precorrin-2 dehydrogenase /sirohydrochlorin ferrochelatase stretch occupies residues 1–203; sequence MDYLPIFVEL…GQIQQAEKQL (203 aa). Residues 22–23 and 43–44 each bind NAD(+); these read EV and PE. A Phosphoserine modification is found at Ser-128. The segment at 214–470 is uroporphyrinogen-III C-methyltransferase; the sequence is GELALVGAGP…ISRPAVVDFA (257 aa). Pro-223 serves as a coordination point for S-adenosyl-L-methionine. Residue Asp-246 is the Proton acceptor of the active site. Lys-268 functions as the Proton donor in the catalytic mechanism. Residues 299–301, Ile-304, 329–330, Met-381, and Gly-410 each bind S-adenosyl-L-methionine; these read GGD and TA.

The protein in the N-terminal section; belongs to the precorrin-2 dehydrogenase / sirohydrochlorin ferrochelatase family. It in the C-terminal section; belongs to the precorrin methyltransferase family.

It catalyses the reaction uroporphyrinogen III + 2 S-adenosyl-L-methionine = precorrin-2 + 2 S-adenosyl-L-homocysteine + H(+). The catalysed reaction is precorrin-2 + NAD(+) = sirohydrochlorin + NADH + 2 H(+). The enzyme catalyses siroheme + 2 H(+) = sirohydrochlorin + Fe(2+). It functions in the pathway cofactor biosynthesis; adenosylcobalamin biosynthesis; precorrin-2 from uroporphyrinogen III: step 1/1. The protein operates within cofactor biosynthesis; adenosylcobalamin biosynthesis; sirohydrochlorin from precorrin-2: step 1/1. Its pathway is porphyrin-containing compound metabolism; siroheme biosynthesis; precorrin-2 from uroporphyrinogen III: step 1/1. It participates in porphyrin-containing compound metabolism; siroheme biosynthesis; siroheme from sirohydrochlorin: step 1/1. It functions in the pathway porphyrin-containing compound metabolism; siroheme biosynthesis; sirohydrochlorin from precorrin-2: step 1/1. Its function is as follows. Multifunctional enzyme that catalyzes the SAM-dependent methylations of uroporphyrinogen III at position C-2 and C-7 to form precorrin-2 via precorrin-1. Then it catalyzes the NAD-dependent ring dehydrogenation of precorrin-2 to yield sirohydrochlorin. Finally, it catalyzes the ferrochelation of sirohydrochlorin to yield siroheme. The chain is Siroheme synthase from Photorhabdus laumondii subsp. laumondii (strain DSM 15139 / CIP 105565 / TT01) (Photorhabdus luminescens subsp. laumondii).